The primary structure comprises 390 residues: tRNA (guanine(9)-N1)-methyltransferase (390 aa).

The segment at 1–72 (MDIDEESYLN…RTAQLAEGYA (72 aa)) is disordered. Basic and acidic residues predominate over residues 43-59 (ARLEEIKPLKRAAERER). Residues 92–340 (KERKEAQRRI…AVIPIRKYAP (249 aa)) enclose the SAM-dependent MTase TRM10-type domain. S-adenosyl-L-methionine is bound by residues 246–247 (LS), glycine 266, 270–274 (DRNRH), cysteine 278, leucine 292, and 305–307 (KVL). The active-site Proton acceptor is the aspartate 270. The tract at residues 343-390 (KTKRAKTETKRNEKEEEEVECTSAEGEEDIGVIEESAEVDPEDVFSNQ) is disordered. Positions 347–356 (AKTETKRNEK) are enriched in basic and acidic residues. The span at 357–390 (EEEEVECTSAEGEEDIGVIEESAEVDPEDVFSNQ) shows a compositional bias: acidic residues.

The protein belongs to the class IV-like SAM-binding methyltransferase superfamily. TRM10 family. In terms of assembly, monomer.

Its subcellular location is the cytoplasm. The protein resides in the nucleus. The catalysed reaction is guanosine(9) in tRNA + S-adenosyl-L-methionine = N(1)-methylguanosine(9) in tRNA + S-adenosyl-L-homocysteine + H(+). S-adenosyl-L-methionine-dependent guanine N(1)-methyltransferase that catalyzes the formation of N(1)-methylguanine at position 9 (m1G9) in cytoplasmic tRNA. The polypeptide is tRNA (guanine(9)-N1)-methyltransferase (Cryptococcus neoformans var. neoformans serotype D (strain JEC21 / ATCC MYA-565) (Filobasidiella neoformans)).